The primary structure comprises 150 residues: UPF0102 protein sll0189 (150 aa).

It belongs to the UPF0102 family.

This is UPF0102 protein sll0189 from Synechocystis sp. (strain ATCC 27184 / PCC 6803 / Kazusa).